A 446-amino-acid chain; its full sequence is Protein adenylyltransferase FICD (446 aa).

Residues 1–18 (MAVTECEWASLGSRIGLR) are Cytoplasmic-facing. The chain crosses the membrane as a helical; Signal-anchor for type II membrane protein span at residues 19 to 39 (AALVLLSGSLLVVLFPLSGLE). Topologically, residues 40–446 (HQYRTALNIL…ECKQTITIKT (407 aa)) are lumenal. 2 TPR repeats span residues 94-127 (AKAA…DPDH) and 128-161 (VDAL…SPHN). Positions 218–223 (TVAIEG) match the Inhibitory (S/T)XXXE(G/N) motif motif. Glu-222 contributes to the ATP binding site. Asn-263 is a glycosylation site (N-linked (GlcNAc...) asparagine). The 136-residue stretch at 273–408 (VTIDNILEIH…VRPFIRFIAK (136 aa)) folds into the Fido domain. ATP is bound at residue 304-307 (VGHH). The active site involves His-351. ATP is bound by residues 355-362 (DGNGRTSR), 387-388 (YY), and Asn-395.

The protein belongs to the fic family. In terms of assembly, homodimer. Mg(2+) is required as a cofactor. Requires Mn(2+) as cofactor.

It localises to the endoplasmic reticulum membrane. The catalysed reaction is L-tyrosyl-[protein] + ATP = O-(5'-adenylyl)-L-tyrosyl-[protein] + diphosphate. It carries out the reaction 3-O-(5'-adenylyl)-L-threonyl-[protein] + H2O = L-threonyl-[protein] + AMP + H(+). It catalyses the reaction L-threonyl-[protein] + ATP = 3-O-(5'-adenylyl)-L-threonyl-[protein] + diphosphate. With respect to regulation, the side chain of Glu-222 determines which of the two opposing activities (AMPylase or de-AMPylase) will take place. In response to endoplasmic reticulum stress, mediates de-AMPylase activity. Adenylyltransferase activity is inhibited by the inhibitory helix present at the N-terminus: Glu-222 binds ATP and competes with ATP-binding at Arg-362, thereby preventing adenylyltransferase activity. In unstressed cells, disengagement of Glu-222 promotes adenylyltransferase activity. Activation dissociates ATP-binding from Glu-222, allowing ordered binding of the entire ATP moiety with the alpha-phosphate in an orientation that is productive for accepting an incoming target hydroxyl side chain. Its function is as follows. Protein that can both mediate the addition of adenosine 5'-monophosphate (AMP) to specific residues of target proteins (AMPylation), and the removal of the same modification from target proteins (de-AMPylation), depending on the context. The side chain of Glu-222 determines which of the two opposing activities (AMPylase or de-AMPylase) will take place. Acts as a key regulator of the ERN1/IRE1-mediated unfolded protein response (UPR) by mediating AMPylation or de-AMPylation of HSPA5/BiP. In unstressed cells, acts as an adenylyltransferase by mediating AMPylation of HSPA5/BiP at 'Thr-518', thereby inactivating it. In response to endoplasmic reticulum stress, acts as a phosphodiesterase by mediating removal of ATP (de-AMPylation) from HSPA5/BiP at 'Thr-518', leading to restore HSPA5/BiP activity. This Xenopus tropicalis (Western clawed frog) protein is Protein adenylyltransferase FICD.